The following is a 177-amino-acid chain: UPF0177 protein YxdF (177 aa).

4 consecutive transmembrane segments (helical) span residues 2–22 (TLVLILIFIIAWKLGYLKNTL), 30–50 (IFWLMGIVFFTLATNYLVTVL), 117–137 (ALVHTGFSWYLLPYLILSFII), and 152–172 (IVHSSVNLFGGSAIKLLDTFF).

This sequence belongs to the UPF0177 family.

The protein resides in the cell membrane. The chain is UPF0177 protein YxdF (yxdF) from Lactococcus lactis subsp. lactis (strain IL1403) (Streptococcus lactis).